The chain runs to 243 residues: 1-(5-phosphoribosyl)-5-[(5-phosphoribosylamino)methylideneamino] imidazole-4-carboxamide isomerase (243 aa).

The active-site Proton acceptor is the Asp8. The active-site Proton donor is the Asp129.

The protein belongs to the HisA/HisF family.

It is found in the cytoplasm. It catalyses the reaction 1-(5-phospho-beta-D-ribosyl)-5-[(5-phospho-beta-D-ribosylamino)methylideneamino]imidazole-4-carboxamide = 5-[(5-phospho-1-deoxy-D-ribulos-1-ylimino)methylamino]-1-(5-phospho-beta-D-ribosyl)imidazole-4-carboxamide. It participates in amino-acid biosynthesis; L-histidine biosynthesis; L-histidine from 5-phospho-alpha-D-ribose 1-diphosphate: step 4/9. This is 1-(5-phosphoribosyl)-5-[(5-phosphoribosylamino)methylideneamino] imidazole-4-carboxamide isomerase from Nitratidesulfovibrio vulgaris (strain DSM 19637 / Miyazaki F) (Desulfovibrio vulgaris).